Reading from the N-terminus, the 1061-residue chain is Lysine-specific demethylase jmjd-3.1 (1061 aa).

Disordered stretches follow at residues 30 to 49 and 256 to 417; these read VKNSQETPPFPGMNSTMRPV and KSLS…KRRT. The segment covering 271–287 has biased composition (polar residues); that stretch reads QHTNSVGSSIGTTSGDS. A compositionally biased stretch (low complexity) spans 310 to 320; sequence STSSEFTETTS. Positions 321-330 are enriched in polar residues; it reads VANQTESNAG. The interval 369 to 417 is required for nuclear localization; the sequence is KKKEQSATEPPIPRTKRAYTKNPNTIRKRRMKKNQSDDEEDDGPPKRRT. Residues 418–759 form a required for binding of unc-3 and for function in Y-to-PDA transdifferentiation region; that stretch reads INYQIEFRDA…FGTNIDLLSE (342 aa). The 164-residue stretch at 760-923 folds into the JmjC domain; sequence NFKKQMNEIE…LATSIVAHDH (164 aa). His811, Glu813, and His891 together coordinate Fe cation. 4 residues coordinate Zn(2+): Cys998, Cys1001, Cys1025, and Cys1028.

It belongs to the UTX family. Interacts with wdr-5.1 and unc-3. The cofactor is Fe(2+). In terms of tissue distribution, mainly expressed in head and tail.

It localises to the nucleus. Its function is as follows. Histone demethylase that specifically demethylates trimethylated 'Lys-27' of histone H3, a mark associated with transcriptional repression, thereby playing a central role in the histone code. Involved in the transcriptional regulation of the heat shock response, unfolded protein response and possibly other stress response target genes. Required for gonad development and organization. Required for the robust transdifferentiation of the Y rectal epithelial cell to the PDA motor neuron during larval development. Acts cell-autonomously in Y-to-PDA transdifferentiation, which depends on the demethylase activity and on recognition of the H3 tail. Cooperates with set-2 and unc-3 to ensure robust Y-to-PDA transdifferentiation. Promotes mitochondrial stress-induced longevity. Involved in lifespan regulation. This chain is Lysine-specific demethylase jmjd-3.1, found in Caenorhabditis elegans.